Reading from the N-terminus, the 115-residue chain is Integration host factor subunit alpha (115 aa).

The protein belongs to the bacterial histone-like protein family. Heterodimer of an alpha and a beta chain.

Functionally, this protein is one of the two subunits of integration host factor, a specific DNA-binding protein that functions in genetic recombination as well as in transcriptional and translational control. The sequence is that of Integration host factor subunit alpha from Burkholderia pseudomallei (strain K96243).